A 328-amino-acid chain; its full sequence is BURP domain-containing protein 11 (328 aa).

A BURP domain is found at Phe74–Arg318.

In terms of tissue distribution, expressed in roots.

This is BURP domain-containing protein 11 (BURP11) from Oryza sativa subsp. japonica (Rice).